A 258-amino-acid chain; its full sequence is Venom plasminogen activator LV-PA (258 aa).

A signal peptide spans 1–18; sequence MVLITVLANLLILQLSYA. The propeptide occupies 19–24; it reads QKSSKL. Positions 25-249 constitute a Peptidase S1 domain; it reads VFGGDECNIN…YTDWIQSIIA (225 aa). A glycan (N-linked (GlcNAc...) asparagine) is linked at Asn-44. Cys-50 and Cys-66 are oxidised to a cystine. Active-site charge relay system residues include His-65 and Asp-110. Intrachain disulfides connect Cys-142-Cys-210, Cys-174-Cys-189, and Cys-200-Cys-225. Ser-204 functions as the Charge relay system in the catalytic mechanism.

This sequence belongs to the peptidase S1 family. Snake venom subfamily. Monomer. N-glycosylated. PubMed:17034951 shows that it contains approximately 10% carbohydrates, PubMed:10871053 shows that it contains approximately 20% carbohydrates. As to expression, expressed by the venom gland.

The protein resides in the secreted. With respect to regulation, inhibited by the serine protease inhibitors NPGB, PMSF, p-aminobenzamidine and aprotinin. Not inhibited by soybean trypsin inhibitor or EDTA. Its function is as follows. Snake venom serine protease that activates plasminogen. Weakly hydrolyzes the alpha chain of human fibrinogen without releasing fibrinopeptide A. Does not hydrolyze plasma kallikrein or factor Xa. Does not clot fibrinogen. Does not affect platelet function. Induces hypotensive effects on rats. Shows a preferential cleavage at Lys-|-Xaa over Arg-|-Xaa bonds. The polypeptide is Venom plasminogen activator LV-PA (Lachesis muta muta (Bushmaster)).